The chain runs to 940 residues: UvrABC system protein A (940 aa).

Residue 31–38 (GLSGSGKS) participates in ATP binding. The segment at 252–279 (CPHCGYSMQELEPRLFSFNNPAGACGTC) adopts a C4-type zinc-finger fold. ABC transporter domains are found at residues 309-586 (WDQK…PDSL) and 606-936 (RDKN…RFLK). 639–646 (GVSGSGKS) contacts ATP. The C4-type zinc finger occupies 739–765 (CEACQGDGVIKVEMHFLPDVYVPCDVC).

It belongs to the ABC transporter superfamily. UvrA family. In terms of assembly, forms a heterotetramer with UvrB during the search for lesions.

The protein localises to the cytoplasm. Its function is as follows. The UvrABC repair system catalyzes the recognition and processing of DNA lesions. UvrA is an ATPase and a DNA-binding protein. A damage recognition complex composed of 2 UvrA and 2 UvrB subunits scans DNA for abnormalities. When the presence of a lesion has been verified by UvrB, the UvrA molecules dissociate. The chain is UvrABC system protein A from Vibrio vulnificus (strain CMCP6).